The sequence spans 692 residues: Protein arginine N-methyltransferase 7 (692 aa).

2 SAM-dependent MTase PRMT-type domains span residues 14–345 (SLEW…YCVW) and 358–684 (SAYQ…ITME). Omega-N-methylarginine is present on R32. Catalysis depends on residues E144 and E153.

It belongs to the class I-like SAM-binding methyltransferase superfamily. Protein arginine N-methyltransferase family. PRMT7 subfamily. In terms of assembly, homodimer and heterodimer. Interacts with PRMT5 and SNRPD3. Interacts with CTCFL.

Its subcellular location is the cytoplasm. It is found in the cytosol. It localises to the nucleus. The enzyme catalyses L-arginyl-[protein] + S-adenosyl-L-methionine = N(omega)-methyl-L-arginyl-[protein] + S-adenosyl-L-homocysteine + H(+). Arginine methyltransferase that can both catalyze the formation of omega-N monomethylarginine (MMA) and symmetrical dimethylarginine (sDMA), with a preference for the formation of MMA. Specifically mediates the symmetrical dimethylation of arginine residues in the small nuclear ribonucleoproteins Sm D1 (SNRPD1) and Sm D3 (SNRPD3); such methylation being required for the assembly and biogenesis of snRNP core particles. Specifically mediates the symmetric dimethylation of histone H4 'Arg-3' to form H4R3me2s. Plays a role in gene imprinting by being recruited by CTCFL at the H19 imprinted control region (ICR) and methylating histone H4 to form H4R3me2s, possibly leading to recruit DNA methyltransferases at these sites. May also play a role in embryonic stem cell (ESC) pluripotency. Also able to mediate the arginine methylation of histone H2A and myelin basic protein (MBP) in vitro; the relevance of such results is however unclear in vivo. This chain is Protein arginine N-methyltransferase 7 (Prmt7), found in Mus musculus (Mouse).